The sequence spans 584 residues: A-type ATP synthase subunit A (584 aa).

Residue 233 to 240 coordinates ATP; it reads GPFGSGKT.

It belongs to the ATPase alpha/beta chains family. In terms of assembly, has multiple subunits with at least A(3), B(3), C, D, E, F, H, I and proteolipid K(x).

The protein localises to the cell membrane. It catalyses the reaction ATP + H2O + 4 H(+)(in) = ADP + phosphate + 5 H(+)(out). Its function is as follows. Component of the A-type ATP synthase that produces ATP from ADP in the presence of a proton gradient across the membrane. The A chain is the catalytic subunit. This is A-type ATP synthase subunit A from Methanobrevibacter smithii (strain ATCC 35061 / DSM 861 / OCM 144 / PS).